Reading from the N-terminus, the 514-residue chain is Alpha-1B adrenergic receptor (514 aa).

At 1 to 45 (MNPDLDTGHNTSAPAHWGELKDANFTGPNQTSSNSTLPQLDVTRA) the chain is on the extracellular side. N-linked (GlcNAc...) asparagine glycosylation is found at Asn10, Asn24, Asn29, and Asn34. A helical transmembrane segment spans residues 46–69 (ISVGCLGAFILFAIVGNILVILSV). Topologically, residues 70–82 (ACNRHLRTPTNYF) are cytoplasmic. Residues 83–104 (IVNLAIADLLLSFTDLPFSATL) traverse the membrane as a helical segment. Residues 105–114 (EVLGYWVLGR) lie on the Extracellular side of the membrane. Residues 115 to 140 (IFCDIWAAVDVLCCTASILSLCAISI) traverse the membrane as a helical segment. A disulfide bond links Cys117 and Cys194. The Cytoplasmic segment spans residues 141–160 (DRYIGVRYSLQYPTLVTRRK). A helical membrane pass occupies residues 161 to 183 (AILALLSVWVLSTVISIGPLLGW). At 184–200 (KEPAPNDDKECGVTEEP) the chain is on the extracellular side. The chain crosses the membrane as a helical span at residues 201–223 (FYALFSSLGSFYIPLAVILVMYC). Topologically, residues 224 to 294 (RVYIVAKRTT…FSREKKAAKT (71 aa)) are cytoplasmic. Thr263 is modified (phosphothreonine). The chain crosses the membrane as a helical span at residues 295–318 (LGIVVGMFILCWLPFFIALPLGSL). The Extracellular segment spans residues 319–325 (FSTLKPP). A helical membrane pass occupies residues 326–350 (DAVFKVVFWLGYFNSCLNPIIYPCS). At 351–514 (SKEFKRAFMR…SNMPLAPGHF (164 aa)) the chain is on the cytoplasmic side. Residue Cys364 is the site of S-palmitoyl cysteine attachment. Positions 367–377 (RGGRRRRRRRR) match the Nuclear localization signal motif. 2 disordered regions span residues 391–429 (GGSLERSQSRKDSLDDSGSCMSGSQRTLPSASPSPGYLG) and 473–514 (LGEP…PGHF). Polar residues predominate over residues 409–423 (SCMSGSQRTLPSASP).

This sequence belongs to the G-protein coupled receptor 1 family. Adrenergic receptor subfamily. ADRA1B sub-subfamily. As to quaternary structure, homo- and heterooligomer. Heterooligomerizes with ADRA1B homooligomers in cardiac myocytes. Interacts with CAVIN4.

Its subcellular location is the nucleus membrane. It localises to the cell membrane. The protein localises to the cytoplasm. It is found in the membrane. The protein resides in the caveola. In terms of biological role, this alpha-adrenergic receptor mediates its action by association with G proteins that activate a phosphatidylinositol-calcium second messenger system. Its effect is mediated by G(q) and G(11) proteins. Nuclear ADRA1A-ADRA1B heterooligomers regulate phenylephrine (PE)-stimulated ERK signaling in cardiac myocytes. The chain is Alpha-1B adrenergic receptor (Adra1b) from Mus musculus (Mouse).